The primary structure comprises 457 residues: Equilibrative nucleoside transporter 1 (457 aa).

The Cytoplasmic portion of the chain corresponds to 1-12; it reads MTTSHQPQDRYK. The helical transmembrane segment at 13 to 29 threads the bilayer; the sequence is AVWLIFFVLGLGTLLPW. Residues 30–82 are Extracellular-facing; that stretch reads NFFITATQYFTSRLNTSQNISLVTNQSCESTEALADPSVSLPARSSLSAIFNN. N-linked (GlcNAc...) asparagine glycans are attached at residues N44, N48, and N54. The chain crosses the membrane as a helical span at residues 83 to 107; sequence VMTLCAMLPLLIFTCLNSFLHQKVS. At 108-111 the chain is on the cytoplasmic side; the sequence is QSLR. Residues 112–130 traverse the membrane as a helical segment; that stretch reads ILGSLLAILLVFLVTATLV. Over 131-138 the chain is Extracellular; that stretch reads KVQMDALS. The helical transmembrane segment at 139-157 threads the bilayer; that stretch reads FFIITMIKIVLINSFGAIL. Over 158 to 174 the chain is Cytoplasmic; the sequence is QASLFGLAGVLPANYTA. The chain crosses the membrane as a helical span at residues 175-199; sequence PIMSGQGLAGFFTSVAMICAVASGS. Residues 200 to 206 lie on the Extracellular side of the membrane; that stretch reads KLSESAF. The chain crosses the membrane as a helical span at residues 207–227; it reads GYFITACAVVILAILCYLALP. Residues 228–291 are Cytoplasmic-facing; that stretch reads WMEFYRHYLQ…IKAILKSIWV (64 aa). S254 bears the Phosphoserine mark. The segment covering 255–266 has biased composition (basic and acidic residues); that stretch reads EGEEPRGGREES. A disordered region spans residues 255 to 275; the sequence is EGEEPRGGREESGVPGPNSLP. Phosphoserine is present on S273. Residues 292-311 form a helical membrane-spanning segment; it reads LALSVCFIFTVTIGLFPAVT. Residues 312–323 are Extracellular-facing; the sequence is AEVESSIAGTSP. The helical transmembrane segment at 324 to 343 threads the bilayer; that stretch reads WKNCYFIPVACFLNFNVFDW. The Cytoplasmic portion of the chain corresponds to 344–360; the sequence is LGRSLTAICMWPGQDSR. Residues 361 to 379 traverse the membrane as a helical segment; the sequence is WLPVLVACRVVFIPLLMLC. At 380–394 the chain is on the extracellular side; it reads NVKQHHYLPSLFKHD. The helical transmembrane segment at 395-414 threads the bilayer; it reads VWFITFMAAFAFSNGYLASL. The Cytoplasmic portion of the chain corresponds to 415–432; that stretch reads CMCFGPKKVKPAEAETAG. The helical transmembrane segment at 433 to 453 threads the bilayer; that stretch reads NIMSFFLCLGLALGAVLSFLL. The Extracellular portion of the chain corresponds to 454–457; sequence RALV.

Belongs to the SLC29A/ENT transporter (TC 2.A.57) family. In terms of assembly, identified in a complex with STOM. Expressed in jejunum, liver and lung. Expressed in testis at the blood-testis barrier (at protein level). Expressed in ventricular myocytes (at protein level). Expressed in kidney.

Its subcellular location is the basolateral cell membrane. The protein resides in the apical cell membrane. It is found in the cell membrane. It carries out the reaction adenosine(in) = adenosine(out). The enzyme catalyses guanosine(in) = guanosine(out). The catalysed reaction is inosine(in) = inosine(out). It catalyses the reaction uridine(out) = uridine(in). It carries out the reaction thymidine(in) = thymidine(out). The enzyme catalyses cytidine(in) = cytidine(out). The catalysed reaction is adenine(out) = adenine(in). It catalyses the reaction guanine(out) = guanine(in). It carries out the reaction thymine(out) = thymine(in). The enzyme catalyses uracil(in) = uracil(out). The catalysed reaction is hypoxanthine(out) = hypoxanthine(in). Its activity is regulated as follows. Transport activity is sensitive to low concentrations of the inhibitor nitrobenzylmercaptopurine riboside (NBMPR). In terms of biological role, uniporter involved in the facilitative transport of nucleosides and nucleobases, and contributes to maintaining their cellular homeostasis. Functions as a Na(+)-independent transporter. Involved in the transport of nucleosides such as adenosine, thymidine and uridine. Also transports purine nucleobases (hypoxanthine, adenine, guanine) and pyrimidine nucleobases (thymine, uracil). Mediates basolateral nucleoside uptake into Sertoli cells, thereby regulating the transport of nucleosides in testis across the blood-testis barrier. Regulates inosine levels in brown adipocytes tissues (BAT) and extracellular inosine levels, which controls BAT-dependent energy expenditure. The chain is Equilibrative nucleoside transporter 1 from Rattus norvegicus (Rat).